Here is a 234-residue protein sequence, read N- to C-terminus: Cyclin-J18 (234 aa).

Belongs to the cyclin family.

This chain is Cyclin-J18 (CYCJ18), found in Arabidopsis thaliana (Mouse-ear cress).